The following is a 506-amino-acid chain: FAD-linked oxidoreductase chry5 (506 aa).

A signal peptide spans 1-17 (MHLQALTGLATLAVTAA). An FAD-binding PCMH-type domain is found at 59–241 (LDKPTVNIVA…TSVTSKTYDA (183 aa)). N-linked (GlcNAc...) asparagine glycans are attached at residues Asn205, Asn272, Asn281, Asn389, and Asn431.

Belongs to the oxygen-dependent FAD-linked oxidoreductase family. It depends on FAD as a cofactor.

Its pathway is pigment biosynthesis. Functionally, FAD-linked oxidoreductase; part of the gene cluster that mediates the biosynthesis of the yellow pigment chrysogine. Pyruvic acid and anthranilic acid are likely substrates for the nonribosomal peptide synthetase chry1/NRPS14, with pyruvic acid adenylated by the first A domain and anthranilic acid by the second. If pyruvic acid and anthranilic acid are merged and released from chry1/NRPS14 by hydrolysis, a subsequent amidation would lead to 2-pyruvoylaminobenzamide. This process is probably catalyzed by the amidotransferase chry2 using glutamine as amino donor. The dehydrogenase chry5 that has a terminal berberine bridge domain for C-N cyclization could catalyze the cyclization of 2-pyruvoylaminobenzamide to yield acetyl-4(3H)-quinazolidinone. A final reduction of acetyl-4(3H)-quinazolidinone catalyzed by the oxidoreductase chry4 would result in chrysogine. This chain is FAD-linked oxidoreductase chry5, found in Gibberella zeae (strain ATCC MYA-4620 / CBS 123657 / FGSC 9075 / NRRL 31084 / PH-1) (Wheat head blight fungus).